A 262-amino-acid chain; its full sequence is Dihydroorotate dehydrogenase B (NAD(+)), electron transfer subunit (262 aa).

One can recognise an FAD-binding FR-type domain in the interval 2–102 (SKVFDAKVLA…MGPLGRGFTL (101 aa)). FAD-binding positions include 53-56 (RPIS), 70-72 (LFR), and 77-78 (GT). Positions 224, 229, 232, and 248 each coordinate [2Fe-2S] cluster.

This sequence belongs to the PyrK family. In terms of assembly, heterotetramer of 2 PyrK and 2 PyrD type B subunits. However, the metal reductase complex seems to be composed of a heterooctamer of 4 PyrK and 4 PyrD subunits. FAD is required as a cofactor. Requires [2Fe-2S] cluster as cofactor.

The protein resides in the cytoplasm. The protein operates within pyrimidine metabolism; UMP biosynthesis via de novo pathway; orotate from (S)-dihydroorotate (NAD(+) route): step 1/1. Functionally, responsible for channeling the electrons from the oxidation of dihydroorotate from the FMN redox center in the PyrD type B subunit to the ultimate electron acceptor NAD(+). In terms of biological role, together with PyrD, also forms a metal reductase complex able to reduce Fe(III)-chelates to Fe(II)-chelates, as well as soluble Cr(VI) and U(VI), using NADH as electron donor. To a lesser extent, can also use NADPH as an electron donor. Is unable to reduce riboflavin and FMN with NADH as electron donor. May have an in vivo role in metal reduction in D.reducens, which is an organism capable of reducing contaminant heavy metals and radionuclides. In Desulforamulus reducens (strain ATCC BAA-1160 / DSM 100696 / MI-1) (Desulfotomaculum reducens), this protein is Dihydroorotate dehydrogenase B (NAD(+)), electron transfer subunit.